The following is a 501-amino-acid chain: Lysine--tRNA ligase (501 aa).

Positions 411 and 418 each coordinate Mg(2+).

This sequence belongs to the class-II aminoacyl-tRNA synthetase family. As to quaternary structure, homodimer. Mg(2+) is required as a cofactor.

Its subcellular location is the cytoplasm. It catalyses the reaction tRNA(Lys) + L-lysine + ATP = L-lysyl-tRNA(Lys) + AMP + diphosphate. The sequence is that of Lysine--tRNA ligase from Clostridium perfringens (strain SM101 / Type A).